The sequence spans 486 residues: E3 ubiquitin-protein ligase RNF8 (486 aa).

The FHA domain maps to 38-92 (VTVGRGFGVTYQLVSKICPLMISRNHCVLKQNPEGQWTIMDNKSLNGVWLNRARL). A required for interaction with PIWIL1 region spans residues 68-72 (QNPEG). Ser-157 carries the phosphoserine modification. The segment covering 180 to 201 (SCESGQSVKSQGKGEVSSTPSE) has biased composition (polar residues). A disordered region spans residues 180–207 (SCESGQSVKSQGKGEVSSTPSENLDPKL). The RING-type zinc-finger motif lies at 404–442 (CIICSEYFIEAVTLNCAHSFCSYCINEWMKRKIECPICR).

It belongs to the RNF8 family. In terms of assembly, homodimer. Forms a E2-E3 ubiquitin ligase complex composed of the RNF8 homodimer and a E2 heterodimer of UBE2N and UBE2V2. Interacts with class III E2s, including UBE2E1, UBE2E2, and UBE2E3 and with UBE2N. Interacts with RXRA. Interacts (via FHA domain) with phosphorylated HERC2 (via C-terminus). Interacts with PIWIL1; leading to sequester RNF8 in the cytoplasm. Interacts with WRAP53/TCAB1. Post-translationally, autoubiquitinated through 'Lys-48' and 'Lys-63' of ubiquitin. 'Lys-63' polyubiquitination is mediated by UBE2N. 'Lys-29'-type polyubiquitination is also observed, but it doesn't require its own functional RING-type zinc finger.

It is found in the nucleus. The protein localises to the cytoplasm. It localises to the midbody. Its subcellular location is the chromosome. The protein resides in the telomere. It carries out the reaction S-ubiquitinyl-[E2 ubiquitin-conjugating enzyme]-L-cysteine + [acceptor protein]-L-lysine = [E2 ubiquitin-conjugating enzyme]-L-cysteine + N(6)-ubiquitinyl-[acceptor protein]-L-lysine.. Its pathway is protein modification; protein ubiquitination. Its function is as follows. E3 ubiquitin-protein ligase that plays a key role in DNA damage signaling via 2 distinct roles: by mediating the 'Lys-63'-linked ubiquitination of histones H2A and H2AX and promoting the recruitment of DNA repair proteins at double-strand breaks (DSBs) sites, and by catalyzing 'Lys-48'-linked ubiquitination to remove target proteins from DNA damage sites. Following DNA DSBs, it is recruited to the sites of damage by ATM-phosphorylated MDC1 and catalyzes the 'Lys-63'-linked ubiquitination of histones H2A and H2AX, thereby promoting the formation of TP53BP1 and BRCA1 ionizing radiation-induced foci (IRIF). Also controls the recruitment of UIMC1-BRCC3 (RAP80-BRCC36) and PAXIP1/PTIP to DNA damage sites. Promotes the recruitment of NBN to DNA damage sites by catalyzing 'Lys-6'-linked ubiquitination of NBN. Also recruited at DNA interstrand cross-links (ICLs) sites and catalyzes 'Lys-63'-linked ubiquitination of histones H2A and H2AX, leading to recruitment of FAAP20 and Fanconi anemia (FA) complex, followed by interstrand cross-link repair. H2A ubiquitination also mediates the ATM-dependent transcriptional silencing at regions flanking DSBs in cis, a mechanism to avoid collision between transcription and repair intermediates. Promotes the formation of 'Lys-63'-linked polyubiquitin chains via interactions with the specific ubiquitin-conjugating UBE2N/UBC13 and ubiquitinates non-histone substrates such as PCNA. Substrates that are polyubiquitinated at 'Lys-63' are usually not targeted for degradation. Also catalyzes the formation of 'Lys-48'-linked polyubiquitin chains via interaction with the ubiquitin-conjugating UBE2L6/UBCH8, leading to degradation of substrate proteins such as CHEK2, JMJD2A/KDM4A and KU80/XRCC5: it is still unclear how the preference toward 'Lys-48'- versus 'Lys-63'-linked ubiquitination is regulated but it could be due to RNF8 ability to interact with specific E2 specific ligases. For instance, interaction with phosphorylated HERC2 promotes the association between RNF8 and UBE2N/UBC13 and favors the specific formation of 'Lys-63'-linked ubiquitin chains. Promotes non-homologous end joining (NHEJ) by promoting the 'Lys-48'-linked ubiquitination and degradation the of KU80/XRCC5. Following DNA damage, mediates the ubiquitination and degradation of JMJD2A/KDM4A in collaboration with RNF168, leading to unmask H4K20me2 mark and promote the recruitment of TP53BP1 at DNA damage sites. Following DNA damage, mediates the ubiquitination and degradation of POLD4/p12, a subunit of DNA polymerase delta. In the absence of POLD4, DNA polymerase delta complex exhibits higher proofreading activity. In addition to its function in damage signaling, also plays a role in higher-order chromatin structure by mediating extensive chromatin decondensation. Involved in the activation of ATM by promoting histone H2B ubiquitination, which indirectly triggers histone H4 'Lys-16' acetylation (H4K16ac), establishing a chromatin environment that promotes efficient activation of ATM kinase. Required in the testis, where it plays a role in the replacement of histones during spermatogenesis. At uncapped telomeres, promotes the joining of deprotected chromosome ends by inducing H2A ubiquitination and TP53BP1 recruitment, suggesting that it may enhance cancer development by aggravating telomere-induced genome instability in case of telomeric crisis. Promotes the assembly of RAD51 at DNA DSBs in the absence of BRCA1 and TP53BP1 Also involved in class switch recombination in immune system, via its role in regulation of DSBs repair. May be required for proper exit from mitosis after spindle checkpoint activation and may regulate cytokinesis. May play a role in the regulation of RXRA-mediated transcriptional activity. Not involved in RXRA ubiquitination by UBE2E2. This is E3 ubiquitin-protein ligase RNF8 from Pongo abelii (Sumatran orangutan).